We begin with the raw amino-acid sequence, 255 residues long: Adenosylcobinamide-GDP ribazoletransferase (255 aa).

6 consecutive transmembrane segments (helical) span residues 43 to 63, 64 to 84, 113 to 133, 141 to 161, 195 to 215, and 234 to 254; these read LVGT…SLFF, PYQV…GAFH, IGTY…VFLT, FGLM…TLIY, LAAI…AILF, and CLGG…IAVV.

Belongs to the CobS family. It depends on Mg(2+) as a cofactor.

The protein resides in the cell inner membrane. The catalysed reaction is alpha-ribazole + adenosylcob(III)inamide-GDP = adenosylcob(III)alamin + GMP + H(+). It carries out the reaction alpha-ribazole 5'-phosphate + adenosylcob(III)inamide-GDP = adenosylcob(III)alamin 5'-phosphate + GMP + H(+). The protein operates within cofactor biosynthesis; adenosylcobalamin biosynthesis; adenosylcobalamin from cob(II)yrinate a,c-diamide: step 7/7. Its function is as follows. Joins adenosylcobinamide-GDP and alpha-ribazole to generate adenosylcobalamin (Ado-cobalamin). Also synthesizes adenosylcobalamin 5'-phosphate from adenosylcobinamide-GDP and alpha-ribazole 5'-phosphate. The protein is Adenosylcobinamide-GDP ribazoletransferase of Vibrio vulnificus (strain CMCP6).